Consider the following 445-residue polypeptide: Phosphoglucosamine mutase (445 aa).

The Phosphoserine intermediate role is filled by Ser102. The Mg(2+) site is built by Ser102, Asp241, Asp243, and Asp245. A Phosphoserine modification is found at Ser102.

The protein belongs to the phosphohexose mutase family. It depends on Mg(2+) as a cofactor. Activated by phosphorylation.

It carries out the reaction alpha-D-glucosamine 1-phosphate = D-glucosamine 6-phosphate. Catalyzes the conversion of glucosamine-6-phosphate to glucosamine-1-phosphate. This is Phosphoglucosamine mutase from Shewanella denitrificans (strain OS217 / ATCC BAA-1090 / DSM 15013).